The sequence spans 284 residues: MNIIAGINEMQTTARSLKQQGKSIAFVPTMGFLHEGHASLLREGRARGDILVLSLFVNPIQFGRNEDLDRYPRDLERDLGVAADCGVDIVFTPSATEMYPEEFQTSISVSRVSQPLCGASRPGHFDGVATVVTKLFNIVMPDIALFGRKDYQQLAVIRRMVADLSQGVTIVGMPIVRESDGLAMSSRNAYLAPPERQSALALSRSIAAVRNAYAAGERSVEALSRMARDIISQEALLKIDYLEFRNEATLQPISEAAGDTLFALAVNVGTTRLIDNTVLGVCRA.

ATP is bound at residue 30–37; that stretch reads MGFLHEGH. The Proton donor role is filled by H37. Q61 provides a ligand contact to (R)-pantoate. Position 61 (Q61) interacts with beta-alanine. Residue 147–150 coordinates ATP; it reads GRKD. Q153 lines the (R)-pantoate pocket. ATP is bound by residues V176 and 184 to 187; that span reads MSSR.

It belongs to the pantothenate synthetase family. Homodimer.

Its subcellular location is the cytoplasm. The enzyme catalyses (R)-pantoate + beta-alanine + ATP = (R)-pantothenate + AMP + diphosphate + H(+). It functions in the pathway cofactor biosynthesis; (R)-pantothenate biosynthesis; (R)-pantothenate from (R)-pantoate and beta-alanine: step 1/1. In terms of biological role, catalyzes the condensation of pantoate with beta-alanine in an ATP-dependent reaction via a pantoyl-adenylate intermediate. The polypeptide is Pantothenate synthetase (Pelobacter propionicus (strain DSM 2379 / NBRC 103807 / OttBd1)).